The following is a 536-amino-acid chain: Bicoumarin synthase desC (536 aa).

A helical transmembrane segment spans residues 12–32 (YVALAGITGFFLVFLGFLVVI). Residues Asn-149 and Asn-371 are each glycosylated (N-linked (GlcNAc...) asparagine). Cys-480 serves as a coordination point for heme.

The protein belongs to the cytochrome P450 family. Heme is required as a cofactor.

Its subcellular location is the membrane. It carries out the reaction 2 7-demethylsiderin + NADPH + O2 = desertorin A + NADP(+) + 2 H2O. It functions in the pathway secondary metabolite biosynthesis. In terms of biological role, non-reducing polyketide synthase; part of the gene cluster that mediates the biosynthesis of the bicoumarin desertorin. The non-reducing polyketide synthase desS first catalyzes the formation of the pentaketidic 4,7-dihydroxy-5-methylcoumarin from acetyl coenzyme A and 4 malonyl coenzyme A molecules. Further O-methylation by desB leads to the formation of 7-demethylsiderin. Then, an oxidative phenol coupling catalyzed by the cytochrome P450 monooxygenase desC forms the 6,8'-dimer M-desertorin A via dimerization the monomeric precursor, 7-demethylsiderin. M-desertorin A is further converted to M-desertorin C. In Aspergillus desertorum (Emericella desertorum), this protein is Bicoumarin synthase desC.